We begin with the raw amino-acid sequence, 1112 residues long: MRRDERDAKAMRSLQPPDGAGSPPESLRNGYVKSCVSPLRQDPPRGFFFHLCRFCNVELRPPPASPQQPRRCSPFCRARLSLGALAAFVLALLLGAEPESWAAGAAWLRTLLSVCSHSLSPLFSIACAFFFLTCFLTRTKRGPGPGRSCGSWWLLALPACCYLGDFLVWQWWSWPWGDGDAGSAAPHTPPEAAAGRLLLVLSCVGLLLTLAHPLRLRHCVLVLLLASFVWWVSFTSLGSLPSALRPLLSGLVGGAGCLLALGLDHFFQIREAPLHPRLSSAAEEKVPVIRPRRRSSCVSLGETAASYYGSCKIFRRPSLPCISREQMILWDWDLKQWYKPHYQNSGGGNGVDLSVLNEARNMVSDLLTDPSLPPQVISSLRSISSLMGAFSGSCRPKINPLTPFPGFYPCSEIEDPAEKGDRKLNKGLNRNSLPTPQLRRSSGTSGLLPVEQSSRWDRNNGKRPHQEFGISSQGCYLNGPFNSNLLTIPKQRSSSVSLTHHVGLRRAGVLSSLSPVNSSNHGPVSTGSLTNRSPIEFPDTADFLNKPSVILQRSLGNAPNTPDFYQQLRNSDSNLCNSCGHQMLKYVSTSESDGTDCCSGKSGEEENIFSKESFKLMETQQEEETEKKDSRKLFQEGDKWLTEEAQSEQQTNIEQEVSLDLILVEEYDSLIEKMSNWNFPIFELVEKMGEKSGRILSQVMYTLFQDTGLLEIFKIPTQQFMNYFRALENGYRDIPYHNRIHATDVLHAVWYLTTRPVPGLQQIHNGCGTGNETDSDGRINHGRIAYISSKSCSNPDESYGCLSSNIPALELMALYVAAAMHDYDHPGRTNAFLVATNAPQAVLYNDRSVLENHHAASAWNLYLSRPEYNFLLHLDHVEFKRFRFLVIEAILATDLKKHFDFLAEFNAKANDVNSNGIEWSNENDRLLVCQVCIKLADINGPAKVRDLHLKWTEGIVNEFYEQGDEEANLGLPISPFMDRSSPQLAKLQESFITHIVGPLCNSYDAAGLLPGQWLEAEEDNDTESGDDEDGEELDTEDEEMENNLNPKPPRRKSRRRIFCQLMHHLTENHKIWKEIVEEEEKCKADGNKLQVENSSLPQADEIQVIEEADEEE.

Residues 1–10 (MRRDERDAKA) show a composition bias toward basic and acidic residues. Positions 1-25 (MRRDERDAKAMRSLQPPDGAGSPPE) are interaction with RAPGEF3. Residues 1–26 (MRRDERDAKAMRSLQPPDGAGSPPES) form a disordered region. Position 13 is a phosphoserine (serine 13). The next 6 helical transmembrane spans lie at 88 to 108 (FVLA…AAWL), 117 to 137 (HSLS…CFLT), 152 to 172 (WWLL…WQWW), 192 to 212 (AAAG…TLAH), 220 to 240 (VLVL…LGSL), and 247 to 267 (LLSG…DHFF). At serine 295 the chain carries Phosphoserine; by PKB/AKT1 or PKB/AKT2. Phosphoserine occurs at positions 296 and 442. Positions 418–471 (EKGDRKLNKGLNRNSLPTPQLRRSSGTSGLLPVEQSSRWDRNNGKRPHQEFGIS) are disordered. Residues 428 to 445 (LNRNSLPTPQLRRSSGTS) show a composition bias toward polar residues. Residues 436–460 (PQLRRSSGTSGLLPVEQSSRWDRNN) are interaction with PIK3R6. The span at 454-466 (SRWDRNNGKRPHQ) shows a compositional bias: basic and acidic residues. Residues 651-1079 (TNIEQEVSLD…KIWKEIVEEE (429 aa)) enclose the PDEase domain. Histidine 737 functions as the Proton donor in the catalytic mechanism. Residue histidine 737 coordinates AMP. Mg(2+) contacts are provided by histidine 741, histidine 821, aspartate 822, and aspartate 937. AMP is bound by residues aspartate 822, aspartate 937, and glutamine 988. 2 stretches are compositionally biased toward acidic residues: residues 1017 to 1041 (EEDN…EEME) and 1103 to 1112 (QVIEEADEEE). Disordered regions lie at residues 1017–1051 (EEDN…PPRR) and 1092–1112 (ENSS…DEEE).

This sequence belongs to the cyclic nucleotide phosphodiesterase family. PDE3 subfamily. In terms of assembly, homodimer. Interacts with PIK3CG; regulates PDE3B activity and thereby cAMP levels in cells. Interacts with RAPGEF3 and PIK3R6; form a signaling complex that regulates phosphatidylinositol 3-kinase gamma in angiogenesis. Interacts with ABHD15; this interaction regulates PDE3B's stability and expression and, thereby, impacts the antilipolytic action of insulin. Requires Mg(2+) as cofactor. The cofactor is Mn(2+). Post-translationally, phosphorylation at Ser-295 mediates insulin-induced activation of PDE3B. In terms of tissue distribution, abundant in adipose tissues.

The protein localises to the membrane. It catalyses the reaction a nucleoside 3',5'-cyclic phosphate + H2O = a nucleoside 5'-phosphate + H(+). The catalysed reaction is 3',5'-cyclic AMP + H2O = AMP + H(+). It carries out the reaction 3',5'-cyclic GMP + H2O = GMP + H(+). Its activity is regulated as follows. Inhibited by cGMP. Its function is as follows. Cyclic nucleotide phosphodiesterase with a dual-specificity for the second messengers cAMP and cGMP, which are key regulators of many important physiological process. Regulates angiogenesis by inhibiting the cAMP-dependent guanine nucleotide exchange factor RAPGEF3 and downstream phosphatidylinositol 3-kinase gamma-mediated signaling. Controls cardiac contractility by reducing cAMP concentration in cardiocytes. The protein is cGMP-inhibited 3',5'-cyclic phosphodiesterase 3B of Homo sapiens (Human).